The chain runs to 32 residues: Alpha-amylase inhibitor AAI (32 aa).

Disulfide bonds link Cys1/Cys18, Cys8/Cys23, and Cys17/Cys31.

As to expression, endosperm.

Functionally, alpha-amylase inhibitor. It is active against alpha-amylases from Tribolium castaneum and Prostephanus truncatus larvae. The sequence is that of Alpha-amylase inhibitor AAI (AAI) from Amaranthus hypochondriacus (Prince-of-Wales feather).